Reading from the N-terminus, the 35-residue chain is Photosystem II reaction center protein T (35 aa).

Residues 3 to 23 (ALVYTFLLVSTLGIIFFAIFF) traverse the membrane as a helical segment.

This sequence belongs to the PsbT family. PSII is composed of 1 copy each of membrane proteins PsbA, PsbB, PsbC, PsbD, PsbE, PsbF, PsbH, PsbI, PsbJ, PsbK, PsbL, PsbM, PsbT, PsbY, PsbZ, Psb30/Ycf12, at least 3 peripheral proteins of the oxygen-evolving complex and a large number of cofactors. It forms dimeric complexes.

It localises to the plastid. Its subcellular location is the chloroplast thylakoid membrane. In terms of biological role, found at the monomer-monomer interface of the photosystem II (PS II) dimer, plays a role in assembly and dimerization of PSII. PSII is a light-driven water plastoquinone oxidoreductase, using light energy to abstract electrons from H(2)O, generating a proton gradient subsequently used for ATP formation. This chain is Photosystem II reaction center protein T, found in Saururus cernuus (Lizard's tail).